The following is a 283-amino-acid chain: MATGGLAIIQSMKHKLPPSERKLADYILAHPHKAIESTVNEISALANSSDAAVIRLCKSLGLKGFQDLKMRVAGDLAKPTFQGYRDIVPHEPLPSISEKTAGNAIQAIQDTSDLMDYKELERAVSLLLKAHTVHFIGLGASGIVAKDAQQKWLRIHKQATAFTDTHLVASLIANADKDDIVFAISFSGETQEIVELFAMAKEKGITTISLTQFSQTSVSALADVPLYTAHSNEALIRSAATSSRLAQLFIIDVLFLGMAAEQYETTTGYIDKTRAAIQSMRIK.

The 77-residue stretch at Thr-3 to Pro-79 folds into the HTH rpiR-type domain. The H-T-H motif DNA-binding region spans Val-39–Lys-58. One can recognise an SIS domain in the interval Ala-123–Glu-264.

This is an uncharacterized protein from Bacillus subtilis (strain 168).